The chain runs to 98 residues: uncharacterized protein (98 aa).

2 helical membrane-spanning segments follow: residues 8–28 (LILK…HYFL) and 73–93 (LWFI…SISL).

The protein resides in the membrane. This is an uncharacterized protein from Saccharomyces cerevisiae (strain ATCC 204508 / S288c) (Baker's yeast).